We begin with the raw amino-acid sequence, 359 residues long: N6-succino-2-amino-2'-deoxyadenylate synthase (359 aa).

Ser23 (proton acceptor) is an active-site residue. ATP contacts are provided by Ser23, Thr24, Gly25, Lys26, and Gly27. Position 23 (Ser23) interacts with dGMP. Ser23 contributes to the Mg(2+) binding site. A dGMP-binding site is contributed by Asn49. The ATP site is built by Gly51, His52, and Thr53. Gly51 is a binding site for Mg(2+). DGMP contacts are provided by Ser131, Thr132, and Arg146. Residue Gln190 coordinates ATP. Position 205 (Thr205) interacts with dGMP. Thr274 is a binding site for Mg(2+). Residues Thr274, Val275, and Arg280 each contribute to the L-aspartate site. 2 residues coordinate ATP: Asn305 and Gln308.

It belongs to the Caudovirales PurZ family. Mg(2+) serves as cofactor.

It carries out the reaction dGMP + L-aspartate + ATP = (2S)-2-amino-2'-deoxyadenylo-succinate + ADP + phosphate + 2 H(+). Its pathway is purine metabolism. In terms of biological role, involved in the synthesis of the atypical nucleotide dZTP (2-amino-2'-deoxyadenosine-5'-triphosphate). Catalyzes the condensation of aspartate with deoxyguanylate into dSMP (N6-succino-2-amino-2'-deoxyadenylate), which undergoes defumarylation and phosphorylation respectively by host PurB and guanylate/nucleoside diphosphate kinases to give dZTP. dZTP is integrated into the viral genome instead of adenine by the viral DNA polymerase. This Z-base probably completely replaces adenosine and forms a triple bond to the opposite T-base. The resulting non-standard viral DNA is called Z-genome. The chemically modified DNA is probably harder for the host bacteria to digest with nucleases or restriction enzymes. The polypeptide is N6-succino-2-amino-2'-deoxyadenylate synthase (Cyanophage S-2L (Cyanobacteria phage S-2L)).